A 356-amino-acid chain; its full sequence is Replication factor C subunit 3 (356 aa).

The residue at position 20 (Lys-20) is an N6-acetyllysine. Ser-125 is modified (phosphoserine).

It belongs to the activator 1 small subunits family. Subunit of the RFC complex, an heteropentameric complex consisting of a large subunit RFC1 and four small subunits RFC2, RFC3, RFC4 and RFC5; the RFC complex interacts with PCNA. Forms an heterotetrameric complex with RFC2, RFC4 and RFC5; this complex has ATPase activity but is not stimulated by PCNA. The heterotetramer of subunits RFC2, RFC3, RFC4 and RFC5 interacts with RAD17. Interacts with CNTD1; this interaction facilitates crossover formation.

The protein localises to the nucleus. Functionally, subunit of the replication factor C (RFC) complex which acts during elongation of primed DNA templates by DNA polymerases delta and epsilon, and is necessary for ATP-dependent loading of proliferating cell nuclear antigen (PCNA) onto primed DNA. This chain is Replication factor C subunit 3 (RFC3), found in Bos taurus (Bovine).